Consider the following 337-residue polypeptide: Bifunctional methylenetetrahydrofolate dehydrogenase/cyclohydrolase, mitochondrial (337 aa).

The transit peptide at 1 to 30 directs the protein to the mitochondrion; the sequence is MATALCPLRALGQTAFRPRTRRLHLSAPRA. Residues 79 to 83 and 126 to 128 contribute to the substrate site; these read YVLNK and VQL. Residues 195–197 and Arg228 each bind NAD(+); that span reads GRS. 304 to 308 contributes to the substrate binding site; sequence PGGVG.

This sequence belongs to the tetrahydrofolate dehydrogenase/cyclohydrolase family. Mg(2+) serves as cofactor.

The protein localises to the mitochondrion. It carries out the reaction (6R)-5,10-methylene-5,6,7,8-tetrahydrofolate + NAD(+) = (6R)-5,10-methenyltetrahydrofolate + NADH. The catalysed reaction is (6R)-5,10-methenyltetrahydrofolate + H2O = (6R)-10-formyltetrahydrofolate + H(+). Functionally, although its dehydrogenase activity is NAD-specific, it can also utilize NADP at a reduced efficiency. This chain is Bifunctional methylenetetrahydrofolate dehydrogenase/cyclohydrolase, mitochondrial (MTHFD2), found in Gallus gallus (Chicken).